Reading from the N-terminus, the 360-residue chain is Phospho-N-acetylmuramoyl-pentapeptide-transferase (360 aa).

Residues 1-25 lie on the Periplasmic side of the membrane; it reads MLVWLAEHLVKYYSGFNVFSYLTFR. A helical transmembrane segment spans residues 26 to 46; sequence AIVSLLTALFISLWMGPRMIA. At 47 to 71 the chain is on the cytoplasmic side; that stretch reads RLQKLSFGQVVRNDGPESHFSKRGT. A helical transmembrane segment spans residues 72-92; that stretch reads PTMGGIMILTAIVISVLLWAY. Position 93 (P93) is a topological domain, periplasmic. Residues 94–114 traverse the membrane as a helical segment; the sequence is SNPYVWCVLVVLIGYGIIGFV. Residues 115 to 131 are Cytoplasmic-facing; sequence DDYHKVVRKDTKGLIAR. A helical transmembrane segment spans residues 132-152; the sequence is WKYFWMSVIALGVAFALYLVG. Over 153–167 the chain is Periplasmic; the sequence is KDTPATQLVVPFFKD. A helical membrane pass occupies residues 168 to 188; sequence VMPQLGLFYILLSYFVIVGTG. The Cytoplasmic portion of the chain corresponds to 189 to 198; that stretch reads NAVNLTDGLD. The chain crosses the membrane as a helical span at residues 199-219; the sequence is GLAIMPTVFVAAGFALVAWAT. Residues 220 to 235 lie on the Periplasmic side of the membrane; it reads GNMNFANYLHIPYLRY. The helical transmembrane segment at 236 to 256 threads the bilayer; sequence AGELVIVCTAIVGAGLGFLWF. The Cytoplasmic segment spans residues 257 to 262; it reads NTYPAQ. A helical membrane pass occupies residues 263-283; that stretch reads VFMGDVGSLALGGALGIIAVL. Residues 284 to 287 lie on the Periplasmic side of the membrane; the sequence is LRQE. A helical membrane pass occupies residues 288 to 308; that stretch reads FLLVIMGGVFVVETLSVILQV. At 309-337 the chain is on the cytoplasmic side; sequence GSFKLRGQRIFRMAPIHHHYELKGWPEPR. Residues 338–358 form a helical membrane-spanning segment; it reads VIVRFWIISLMLVLIGLATLK. Residues 359–360 lie on the Periplasmic side of the membrane; the sequence is VR.

Belongs to the glycosyltransferase 4 family. MraY subfamily. It depends on Mg(2+) as a cofactor.

It localises to the cell inner membrane. The catalysed reaction is UDP-N-acetyl-alpha-D-muramoyl-L-alanyl-gamma-D-glutamyl-meso-2,6-diaminopimeloyl-D-alanyl-D-alanine + di-trans,octa-cis-undecaprenyl phosphate = di-trans,octa-cis-undecaprenyl diphospho-N-acetyl-alpha-D-muramoyl-L-alanyl-D-glutamyl-meso-2,6-diaminopimeloyl-D-alanyl-D-alanine + UMP. Its pathway is cell wall biogenesis; peptidoglycan biosynthesis. Catalyzes the initial step of the lipid cycle reactions in the biosynthesis of the cell wall peptidoglycan: transfers peptidoglycan precursor phospho-MurNAc-pentapeptide from UDP-MurNAc-pentapeptide onto the lipid carrier undecaprenyl phosphate, yielding undecaprenyl-pyrophosphoryl-MurNAc-pentapeptide, known as lipid I. This chain is Phospho-N-acetylmuramoyl-pentapeptide-transferase, found in Salmonella paratyphi A (strain ATCC 9150 / SARB42).